Reading from the N-terminus, the 429-residue chain is Threonine synthase (429 aa).

Lysine 108 carries the N6-(pyridoxal phosphate)lysine modification.

Belongs to the threonine synthase family. It depends on pyridoxal 5'-phosphate as a cofactor.

It catalyses the reaction O-phospho-L-homoserine + H2O = L-threonine + phosphate. It participates in amino-acid biosynthesis; L-threonine biosynthesis; L-threonine from L-aspartate: step 5/5. In terms of biological role, catalyzes the gamma-elimination of phosphate from L-phosphohomoserine and the beta-addition of water to produce L-threonine. In Buchnera aphidicola subsp. Acyrthosiphon pisum (strain APS) (Acyrthosiphon pisum symbiotic bacterium), this protein is Threonine synthase (thrC).